A 373-amino-acid chain; its full sequence is Methylmalonyl-CoA decarboxylase subunit beta (373 aa).

10 helical membrane-spanning segments follow: residues 17–37 (FLAF…LLYL), 38–58 (AFAR…CLLA), 81–101 (IFPP…PLIA), 106–126 (LLLG…AMML), 132–152 (EAAA…YLAT), 156–176 (PHLL…VPLI), 206–226 (IVFP…ITSL), 257–277 (VTIF…FLSL), 280–300 (IKII…GVLF), and 343–363 (FLLM…AVAA).

It belongs to the GcdB/MmdB/OadB family. The methylmalonyl-CoA decarboxylase is composed of five subunits: the carboxyltransferase alpha subunit (MmdA), the tunnel beta subunit (MmdB), the biotin-containing gamma subunit (MmdC), and the delta (MmdD) and epsilon (MmdE) subunits. Post-translationally, the N-terminus is blocked.

It localises to the cell membrane. It catalyses the reaction (S)-methylmalonyl-CoA + Na(+)(in) + H(+)(out) = propanoyl-CoA + Na(+)(out) + CO2. Its activity is regulated as follows. Completely inhibited by avidin. Functionally, tunnel subunit of the sodium ion pump methylmalonyl-CoA decarboxylase, which converts the chemical energy of a decarboxylation reaction into an electrochemical gradient of Na(+) ions across the cytoplasmic membrane, thereby creating a sodium ion motive force that is used for ATP synthesis. The beta subunit catalyzes the decarboxylation of the carboxybiotin carrier protein and the coupled export of Na(+) ions. Can also convert malonyl-CoA into acetyl-CoA. The polypeptide is Methylmalonyl-CoA decarboxylase subunit beta (Veillonella parvula (Staphylococcus parvulus)).